The primary structure comprises 318 residues: NADH-ubiquinone oxidoreductase chain 1 (318 aa).

8 consecutive transmembrane segments (helical) span residues 3-23 (LINV…LTLL), 69-89 (LMFT…WIPI), 100-120 (LGVL…LWSG), 135-155 (AVAQ…SIMM), 171-191 (HMWL…STLA), 223-243 (FFLA…ILFF), 253-273 (ELHT…FLWV), and 293-313 (FLPL…TFAG).

Belongs to the complex I subunit 1 family.

It is found in the mitochondrion inner membrane. The enzyme catalyses a ubiquinone + NADH + 5 H(+)(in) = a ubiquinol + NAD(+) + 4 H(+)(out). Its function is as follows. Core subunit of the mitochondrial membrane respiratory chain NADH dehydrogenase (Complex I) that is believed to belong to the minimal assembly required for catalysis. Complex I functions in the transfer of electrons from NADH to the respiratory chain. The immediate electron acceptor for the enzyme is believed to be ubiquinone. This chain is NADH-ubiquinone oxidoreductase chain 1 (MT-ND1), found in Dasypus novemcinctus (Nine-banded armadillo).